The sequence spans 412 residues: Autophagy-related protein 34 (412 aa).

The AMS1-binding stretch occupies residues Asn-246–Leu-348.

In terms of assembly, interacts with AMS1, ATG8 and ATG11.

It localises to the preautophagosomal structure membrane. In terms of biological role, cargo-receptor protein involved in the cytoplasm to vacuole transport (Cvt) and in autophagy. Recognizes cargo proteins, such as AMS1 and delivers them to the pre-autophagosomal structure for eventual engulfment by the autophagosome and targeting to the vacuole. In Saccharomyces cerevisiae (strain ATCC 204508 / S288c) (Baker's yeast), this protein is Autophagy-related protein 34 (ATG34).